A 251-amino-acid polypeptide reads, in one-letter code: NADH-quinone oxidoreductase subunit B (251 aa).

4 residues coordinate [4Fe-4S] cluster: Cys-38, Cys-39, Cys-104, and Cys-134. The tract at residues 208–251 is disordered; sequence RKGLPPGSMTDVGWIPPEARERLKAGRGAGASGSGEREEGKEGA. The segment covering 242–251 has biased composition (basic and acidic residues); it reads GEREEGKEGA.

The protein belongs to the complex I 20 kDa subunit family. As to quaternary structure, NDH-1 is composed of 14 different subunits. Subunits NuoB, C, D, E, F, and G constitute the peripheral sector of the complex. The cofactor is [4Fe-4S] cluster.

Its subcellular location is the cell membrane. The enzyme catalyses a quinone + NADH + 5 H(+)(in) = a quinol + NAD(+) + 4 H(+)(out). In terms of biological role, NDH-1 shuttles electrons from NADH, via FMN and iron-sulfur (Fe-S) centers, to quinones in the respiratory chain. The immediate electron acceptor for the enzyme in this species is believed to be a menaquinone. Couples the redox reaction to proton translocation (for every two electrons transferred, four hydrogen ions are translocated across the cytoplasmic membrane), and thus conserves the redox energy in a proton gradient. The chain is NADH-quinone oxidoreductase subunit B from Rubrobacter xylanophilus (strain DSM 9941 / JCM 11954 / NBRC 16129 / PRD-1).